Here is a 241-residue protein sequence, read N- to C-terminus: Orotidine 5'-phosphate decarboxylase (241 aa).

Substrate-binding positions include aspartate 15, lysine 37, 64 to 73 (DLKYHDIPNT), threonine 126, arginine 187, glutamine 196, glycine 216, and arginine 217. The active-site Proton donor is the lysine 66.

Belongs to the OMP decarboxylase family. Type 1 subfamily. In terms of assembly, homodimer.

The catalysed reaction is orotidine 5'-phosphate + H(+) = UMP + CO2. The protein operates within pyrimidine metabolism; UMP biosynthesis via de novo pathway; UMP from orotate: step 2/2. Its function is as follows. Catalyzes the decarboxylation of orotidine 5'-monophosphate (OMP) to uridine 5'-monophosphate (UMP). The chain is Orotidine 5'-phosphate decarboxylase from Geotalea uraniireducens (strain Rf4) (Geobacter uraniireducens).